Here is a 495-residue protein sequence, read N- to C-terminus: Methyl viologen resistance protein SmvA (495 aa).

Transmembrane regions (helical) follow at residues Trp5 to Leu25, Leu44 to Leu64, Leu73 to Thr93, Trp96 to Leu116, Val135 to Leu155, Phe158 to Thr178, Pro192 to Ala212, Leu220 to Ile240, Ile260 to Leu280, Val299 to Val319, Val327 to Phe347, Leu357 to Met377, Ile391 to Leu411, and Val469 to Leu489.

It belongs to the major facilitator superfamily. TCR/Tet family.

The protein resides in the cell inner membrane. In terms of biological role, major efflux pump for acriflavine and other quaternary ammonium compounds (QACs). Also required for resistance to methyl viologen. In Salmonella typhimurium (strain LT2 / SGSC1412 / ATCC 700720), this protein is Methyl viologen resistance protein SmvA (smvA).